We begin with the raw amino-acid sequence, 425 residues long: 5-hydroxytryptamine receptor 7 (425 aa).

At 1–72 the chain is on the extracellular side; sequence MLIQVQPSHL…LLYGDTEKIV (72 aa). N-linked (GlcNAc...) asparagine glycans are attached at residues Asn-14, Asn-41, and Asn-51. The chain crosses the membrane as a helical span at residues 73-97; it reads IGVVLSIITLFTIAGNALVIISVCI. Residues 98-107 lie on the Cytoplasmic side of the membrane; sequence VKKLRQPSNY. A helical transmembrane segment spans residues 108–129; it reads LVVSLAAADLSVAVAVMPFVII. Over 130 to 141 the chain is Extracellular; sequence TDLVGGEWLFGK. A helical membrane pass occupies residues 142–167; it reads VFCNVFIAMDVMCCTASIMTLCVISV. A disulfide bridge links Cys-144 with Cys-220. Asp-151 is a serotonin binding site. At 168–187 the chain is on the cytoplasmic side; the sequence is DRYLGITRPLTYPARQNGKL. Residues 188 to 208 traverse the membrane as a helical segment; sequence MAKMVFIVWLLSASITLPPLF. Over 209-226 the chain is Extracellular; it reads GWAKNVNVERVCLISQDF. Residues 227-249 form a helical membrane-spanning segment; it reads GYTVYSTAVAFYIPMTVMLVMYQ. Topologically, residues 250–322 are cytoplasmic; the sequence is RIFVAAKISA…SIFKREQKAA (73 aa). Residues 323 to 348 form a helical membrane-spanning segment; sequence RTLGIIVGAFTFCWLPFFLLSTARPF. Topologically, residues 349 to 359 are extracellular; sequence ICGIMCSCMPL. A helical transmembrane segment spans residues 360–383; the sequence is RLERTLLWLGYTNSLINPLIYAFF. Residues 384-425 lie on the Cytoplasmic side of the membrane; sequence NRDLRTTFWNLLRCKYTNINRRLSAASMHEALKVTERHEGIL. Cys-397 is lipidated: S-palmitoyl cysteine.

It belongs to the G-protein coupled receptor 1 family.

It localises to the cell membrane. Its function is as follows. G-protein coupled receptor for 5-hydroxytryptamine (serotonin), a biogenic hormone that functions as a neurotransmitter, a hormone and a mitogen. Ligand binding causes a conformation change that triggers signaling via guanine nucleotide-binding proteins (G proteins) and modulates the activity of downstream effectors. HTR7 is coupled to G(s) G alpha proteins and mediates activation of adenylate cyclase activity. The sequence is that of 5-hydroxytryptamine receptor 7 (htr7) from Xenopus laevis (African clawed frog).